The following is a 239-amino-acid chain: Proteasome activator complex subunit 2 (239 aa).

A2 carries the post-translational modification N-acetylalanine. A Phosphoserine modification is found at S10. Positions 65-86 are disordered; the sequence is DIPIPDPPPKDDEMETDKQEKK. Positions 72–86 are enriched in basic and acidic residues; the sequence is PPKDDEMETDKQEKK.

It belongs to the PA28 family. As to quaternary structure, heterodimer of PSME1 and PSME2, which forms a hexameric ring.

Implicated in immunoproteasome assembly and required for efficient antigen processing. The PA28 activator complex enhances the generation of class I binding peptides by altering the cleavage pattern of the proteasome. This chain is Proteasome activator complex subunit 2 (PSME2), found in Bos taurus (Bovine).